Here is a 1503-residue protein sequence, read N- to C-terminus: Rho GTPase-activating protein 5 (1503 aa).

4 consecutive FF domains span residues 267 to 325 (QLVV…HIEQ), 366 to 420 (KLME…HVQH), 427 to 481 (RIEM…HQRE), and 482 to 548 (IVEK…HIGF). Residue tyrosine 550 is modified to 3'-nitrotyrosine. 2 positions are modified to phosphoserine: serine 590 and serine 765. The pG1 pseudoGTPase domain occupies 590-763 (STNIDKVNLF…LESVKHNLDV (174 aa)). In terms of domain architecture, pG2 pseudoGTPase spans 779–944 (RIVMCAMCGD…FSDVLEKKNM (166 aa)). A phosphoserine mark is found at serine 951 and serine 968. Disordered regions lie at residues 975–1004 (YNNY…LPTP), 1022–1050 (HSTP…PKTN), and 1069–1091 (NPRK…SDNY). Positions 1036 to 1045 (VPPPIKPKPV) are enriched in pro residues. Phosphoserine is present on serine 1115. Disordered regions lie at residues 1129–1157 (NTQG…YKYK) and 1169–1255 (YRRT…TRRN). The segment covering 1141-1151 (RTSKGHGERRP) has biased composition (basic and acidic residues). Phosphoserine occurs at positions 1196, 1203, and 1219. In terms of domain architecture, Rho-GAP spans 1263-1450 (MPLQDLVTAE…TFIQQCQFFF (188 aa)).

May interact with RASA1/p120GAP. Expressed in spinal cord, cerebellum, kidney, testis and lung.

The protein resides in the cytoplasm. Its subcellular location is the cell membrane. GTPase-activating protein for Rho family members. This Mus musculus (Mouse) protein is Rho GTPase-activating protein 5 (Arhgap5).